An 88-amino-acid polypeptide reads, in one-letter code: Large ribosomal subunit protein bL27 (88 aa).

Positions 1–24 are disordered; that stretch reads MAHKKGTGSTRNGRDSNSKRLGVK.

The protein belongs to the bacterial ribosomal protein bL27 family.

The sequence is that of Large ribosomal subunit protein bL27 from Prochlorococcus marinus (strain MIT 9303).